The sequence spans 38 residues: Phospholipase A2 2 (38 aa).

Residues Tyr-28, Gly-30, and Gly-32 each coordinate Ca(2+).

The protein belongs to the phospholipase A2 family. Group I subfamily. Ca(2+) is required as a cofactor. In terms of tissue distribution, expressed by the venom gland.

Its subcellular location is the secreted. It catalyses the reaction a 1,2-diacyl-sn-glycero-3-phosphocholine + H2O = a 1-acyl-sn-glycero-3-phosphocholine + a fatty acid + H(+). In terms of biological role, snake venom phospholipase A2 (PLA2) that inhibits neuromuscular transmission by blocking acetylcholine release from the nerve termini. PLA2 catalyzes the calcium-dependent hydrolysis of the 2-acyl groups in 3-sn-phosphoglycerides. The protein is Phospholipase A2 2 of Calliophis bivirgatus (Blue Malaysian coral snake).